A 142-amino-acid chain; its full sequence is Large ribosomal subunit protein uL13 (142 aa).

It belongs to the universal ribosomal protein uL13 family. As to quaternary structure, part of the 50S ribosomal subunit.

Functionally, this protein is one of the early assembly proteins of the 50S ribosomal subunit, although it is not seen to bind rRNA by itself. It is important during the early stages of 50S assembly. The polypeptide is Large ribosomal subunit protein uL13 (Acholeplasma laidlawii (strain PG-8A)).